Reading from the N-terminus, the 452-residue chain is uncharacterized protein (452 aa).

Residues 1–452 (MTAVSSNRNP…LRKPEADTAL (452 aa)) are disordered. Composition is skewed to polar residues over residues 29-41 (RTGT…VSSN), 95-111 (SPQT…SNRN), 129-144 (SPQT…SSNR), and 163-176 (SPQT…AVSS). The span at 177–193 (NRDHEDDGCLLKQESRG) shows a compositional bias: basic and acidic residues. Polar residues-rich tracts occupy residues 197-212 (SPQT…SSNR), 231-245 (SPQT…VSSN), 265-280 (SPQT…SSNR), 299-314 (SPQT…SSNR), 333-347 (SPQT…VSSK), 376-394 (TAVS…SNRN), and 412-426 (SPQT…VSSN). Over residues 439–452 (EPQELRKPEADTAL) the composition is skewed to basic and acidic residues.

This is an uncharacterized protein from Homo sapiens (Human).